A 179-amino-acid chain; its full sequence is MSRIGKKPIDIPKGVTVSLAGDTVTVKGPKGELTRNIVAGIRLETAGDQILVQCEKEGKQEGAYRGLVRALVANMVEGVTNGFERVLEINGVGYRAEVKGSALNLSLGYSHPIEYALPKGISAEVEKQTKIIVRGIDKELVGATAAKIRSFRKPEPYKGKGVKYAEERIVRKAGKAGKK.

It belongs to the universal ribosomal protein uL6 family. As to quaternary structure, part of the 50S ribosomal subunit.

This protein binds to the 23S rRNA, and is important in its secondary structure. It is located near the subunit interface in the base of the L7/L12 stalk, and near the tRNA binding site of the peptidyltransferase center. The sequence is that of Large ribosomal subunit protein uL6 from Syntrophotalea carbinolica (strain DSM 2380 / NBRC 103641 / GraBd1) (Pelobacter carbinolicus).